The following is a 610-amino-acid chain: Putative sensor histidine kinase NtrY-like (610 aa).

A run of 4 helical transmembrane segments spans residues Ile-18–Ile-38, Lys-49–Thr-69, Ile-92–Ala-112, and Ile-292–Val-312. The 55-residue stretch at Ala-314 to Arg-368 folds into the HAMP domain. The Histidine kinase domain maps to Lys-385 to Glu-596. Position 388 is a phosphohistidine; by autocatalysis (His-388).

The protein resides in the cell membrane. The catalysed reaction is ATP + protein L-histidine = ADP + protein N-phospho-L-histidine.. Its function is as follows. Member of the two-component regulatory system RBE_0470/RBE_0312. The protein is Putative sensor histidine kinase NtrY-like of Rickettsia bellii (strain RML369-C).